The primary structure comprises 207 residues: Ribonuclease HII (207 aa).

The RNase H type-2 domain maps to D12–G201. Positions 18, 19, and 110 each coordinate a divalent metal cation.

The protein belongs to the RNase HII family. The cofactor is Mn(2+). Mg(2+) is required as a cofactor.

The protein resides in the cytoplasm. The enzyme catalyses Endonucleolytic cleavage to 5'-phosphomonoester.. Its function is as follows. Endonuclease that specifically degrades the RNA of RNA-DNA hybrids. This is Ribonuclease HII from Pseudomonas putida (strain ATCC 700007 / DSM 6899 / JCM 31910 / BCRC 17059 / LMG 24140 / F1).